The following is a 91-amino-acid chain: MEYEYPIDLDWSNEEMILVINFFNHVEKYYESGVTAGDFMDAYKRFKEIVPAKAEEKQIFNTFEKSSGYNSYKAVQDVKTHSEEQRVTAKK.

Belongs to the UPF0223 family.

The protein is UPF0223 protein SAR1071 of Staphylococcus aureus (strain MRSA252).